The chain runs to 263 residues: Methylesterase 18 (263 aa).

S80 serves as the catalytic Acyl-ester intermediate. Active-site charge relay system residues include D212 and H240.

This sequence belongs to the AB hydrolase superfamily. Methylesterase family.

It carries out the reaction methyl (indol-3-yl)acetate + H2O = (indol-3-yl)acetate + methanol + H(+). The protein operates within plant hormone biosynthesis. Its function is as follows. Methylesterase shown to have methyl indole-3-acetic acid (MeIAA) esterase activity in vitro. In Arabidopsis thaliana (Mouse-ear cress), this protein is Methylesterase 18.